We begin with the raw amino-acid sequence, 131 residues long: D-ribose pyranase (131 aa).

The active-site Proton donor is the histidine 20. Substrate is bound by residues aspartate 28, histidine 98, and 120–122; that span reads YAN.

This sequence belongs to the RbsD / FucU family. RbsD subfamily. In terms of assembly, homodecamer.

The protein resides in the cytoplasm. It carries out the reaction beta-D-ribopyranose = beta-D-ribofuranose. It functions in the pathway carbohydrate metabolism; D-ribose degradation; D-ribose 5-phosphate from beta-D-ribopyranose: step 1/2. Functionally, catalyzes the interconversion of beta-pyran and beta-furan forms of D-ribose. The protein is D-ribose pyranase of Bacillus cereus (strain G9842).